Here is a 342-residue protein sequence, read N- to C-terminus: Isopentenyl-diphosphate delta-isomerase (342 aa).

11–12 serves as a coordination point for substrate; sequence RK. Residues Ser-68, 69 to 71, Ser-99, and Asn-127 each bind FMN; that span reads SMT. 99 to 101 is a substrate binding site; that stretch reads SMR. Gln-162 provides a ligand contact to substrate. Glu-163 contacts Mg(2+). FMN-binding positions include Lys-194, Thr-224, 274–276, and 295–296; these read GFK and AG.

The protein belongs to the IPP isomerase type 2 family. Homooctamer. Dimer of tetramers. The cofactor is FMN. NADPH serves as cofactor. Mg(2+) is required as a cofactor.

It localises to the cytoplasm. It catalyses the reaction isopentenyl diphosphate = dimethylallyl diphosphate. Involved in the biosynthesis of isoprenoids. Catalyzes the 1,3-allylic rearrangement of the homoallylic substrate isopentenyl (IPP) to its allylic isomer, dimethylallyl diphosphate (DMAPP). The protein is Isopentenyl-diphosphate delta-isomerase of Rickettsia conorii (strain ATCC VR-613 / Malish 7).